The following is a 404-amino-acid chain: Argininosuccinate synthase (404 aa).

Residues 12 to 20 (AYSGGLDTS) and Ala39 each bind ATP. The L-citrulline site is built by Tyr91 and Ser96. Gly121 serves as a coordination point for ATP. L-aspartate-binding residues include Thr123, Asn127, and Asp128. Asn127 contributes to the L-citrulline binding site. Arg131, Ser180, Ser189, Glu265, and Tyr277 together coordinate L-citrulline.

Belongs to the argininosuccinate synthase family. Type 1 subfamily. As to quaternary structure, homotetramer.

Its subcellular location is the cytoplasm. The enzyme catalyses L-citrulline + L-aspartate + ATP = 2-(N(omega)-L-arginino)succinate + AMP + diphosphate + H(+). It functions in the pathway amino-acid biosynthesis; L-arginine biosynthesis; L-arginine from L-ornithine and carbamoyl phosphate: step 2/3. In Vibrio parahaemolyticus serotype O3:K6 (strain RIMD 2210633), this protein is Argininosuccinate synthase.